Reading from the N-terminus, the 72-residue chain is Omega-conotoxin-like S6.6 (72 aa).

Positions 1-22 (MKLTCVVIVAVLLLTACQLLTA) are cleaved as a signal peptide. Positions 23-45 (DDSRGTQKHRALRSDTKLSMSTR) are excised as a propeptide. 3 cysteine pairs are disulfide-bonded: Cys-46/Cys-61, Cys-53/Cys-65, and Cys-60/Cys-71. Cysteine amide is present on Cys-71.

The protein belongs to the conotoxin O1 superfamily. In terms of tissue distribution, expressed by the venom duct.

It is found in the secreted. Its function is as follows. Omega-conotoxins act at presynaptic membranes, they bind and block voltage-gated calcium channels (Cav). This toxin blocks N-, P- and Q-type calcium channels. In Conus striatus (Striated cone), this protein is Omega-conotoxin-like S6.6.